We begin with the raw amino-acid sequence, 177 residues long: Peptide methionine sulfoxide reductase MsrA 2 (177 aa).

Residue C12 is part of the active site.

The protein belongs to the MsrA Met sulfoxide reductase family.

The enzyme catalyses L-methionyl-[protein] + [thioredoxin]-disulfide + H2O = L-methionyl-(S)-S-oxide-[protein] + [thioredoxin]-dithiol. The catalysed reaction is [thioredoxin]-disulfide + L-methionine + H2O = L-methionine (S)-S-oxide + [thioredoxin]-dithiol. Has an important function as a repair enzyme for proteins that have been inactivated by oxidation. Catalyzes the reversible oxidation-reduction of methionine sulfoxide in proteins to methionine. This is Peptide methionine sulfoxide reductase MsrA 2 (msrA2) from Staphylococcus aureus (strain Mu50 / ATCC 700699).